The following is a 302-amino-acid chain: RNA polymerase II holoenzyme cyclin-like subunit (302 aa).

In terms of domain architecture, Cyclin N-terminal spans 53-142; sequence QQLIKLGKRM…VGECEFSLIS (90 aa).

This sequence belongs to the cyclin family. Cyclin C subfamily. As to quaternary structure, component of the srb8-11 complex, a regulatory module of the Mediator complex.

It is found in the nucleus. Its function is as follows. Component of the srb8-11 complex. The srb8-11 complex is a regulatory module of the Mediator complex which is itself involved in regulation of basal and activated RNA polymerase II-dependent transcription. The srb8-11 complex may be involved in the transcriptional repression of a subset of genes regulated by Mediator. It may inhibit the association of the Mediator complex with RNA polymerase II to form the holoenzyme complex. The srb8-11 complex phosphorylates the C-terminal domain (CTD) of the largest subunit of RNA polymerase II. This chain is RNA polymerase II holoenzyme cyclin-like subunit (ssn8), found in Emericella nidulans (strain FGSC A4 / ATCC 38163 / CBS 112.46 / NRRL 194 / M139) (Aspergillus nidulans).